Reading from the N-terminus, the 485-residue chain is Glutamate--tRNA ligase (485 aa).

Residues 11–21 (PSPTGHLHIGN) carry the 'HIGH' region motif. The short motif at 252–256 (KLSKR) is the 'KMSKS' region element. ATP is bound at residue Lys-255.

It belongs to the class-I aminoacyl-tRNA synthetase family. Glutamate--tRNA ligase type 1 subfamily. Monomer.

Its subcellular location is the cytoplasm. The catalysed reaction is tRNA(Glu) + L-glutamate + ATP = L-glutamyl-tRNA(Glu) + AMP + diphosphate. Catalyzes the attachment of glutamate to tRNA(Glu) in a two-step reaction: glutamate is first activated by ATP to form Glu-AMP and then transferred to the acceptor end of tRNA(Glu). This chain is Glutamate--tRNA ligase, found in Bacillus mycoides (strain KBAB4) (Bacillus weihenstephanensis).